The following is a 101-amino-acid chain: NAD(P)H-quinone oxidoreductase subunit 4L, chloroplastic (101 aa).

The next 3 helical transmembrane spans lie at 2-22 (MLEH…YGLI), 32-52 (MCLE…SDLF), and 61-81 (VFSI…PAIV).

This sequence belongs to the complex I subunit 4L family. As to quaternary structure, NDH is composed of at least 16 different subunits, 5 of which are encoded in the nucleus.

It localises to the plastid. The protein localises to the chloroplast thylakoid membrane. It catalyses the reaction a plastoquinone + NADH + (n+1) H(+)(in) = a plastoquinol + NAD(+) + n H(+)(out). The enzyme catalyses a plastoquinone + NADPH + (n+1) H(+)(in) = a plastoquinol + NADP(+) + n H(+)(out). Its function is as follows. NDH shuttles electrons from NAD(P)H:plastoquinone, via FMN and iron-sulfur (Fe-S) centers, to quinones in the photosynthetic chain and possibly in a chloroplast respiratory chain. The immediate electron acceptor for the enzyme in this species is believed to be plastoquinone. Couples the redox reaction to proton translocation, and thus conserves the redox energy in a proton gradient. This is NAD(P)H-quinone oxidoreductase subunit 4L, chloroplastic from Nuphar advena (Common spatterdock).